A 262-amino-acid polypeptide reads, in one-letter code: Tetratricopeptide repeat protein 33 (262 aa).

The segment at 17–63 (ATSQQFEAEAADEKDAAENEDGNWLQASKRRKETLQEGCKQRSQQLK) is disordered. TPR repeat units follow at residues 59 to 92 (SQQLKDEGAQLAENKRYKEAIQKWDEALQLTPGD), 93 to 126 (ATLYEMKSQVLLSLHEMFPAVHAAEMAVKRNPHS), and 127 to 160 (WEAWQTLGRAQLGLGEIVLAIRSFQIALHIYPMN). Ser-197 is subject to Phosphoserine.

This Mus musculus (Mouse) protein is Tetratricopeptide repeat protein 33 (Ttc33).